Here is a 132-residue protein sequence, read N- to C-terminus: Acetylcholinesterase (132 aa).

N-linked (GlcNAc...) asparagine glycosylation is present at asparagine 37. An intrachain disulfide couples cysteine 45 to cysteine 72.

It belongs to the type-B carboxylesterase/lipase family.

Its subcellular location is the synapse. The protein resides in the secreted. It localises to the cell membrane. It catalyses the reaction acetylcholine + H2O = choline + acetate + H(+). Its function is as follows. Rapidly hydrolyzes choline released into the synapse. The polypeptide is Acetylcholinesterase (ACE-1) (Culex pipiens pipiens (Northern house mosquito)).